The following is a 169-amino-acid chain: ATP synthase subunit b (169 aa).

The chain crosses the membrane as a helical span at residues 13-33; the sequence is LFLFQLINFLIIVFILKKFLF.

It belongs to the ATPase B chain family. In terms of assembly, F-type ATPases have 2 components, F(1) - the catalytic core - and F(0) - the membrane proton channel. F(1) has five subunits: alpha(3), beta(3), gamma(1), delta(1), epsilon(1). F(0) has three main subunits: a(1), b(2) and c(10-14). The alpha and beta chains form an alternating ring which encloses part of the gamma chain. F(1) is attached to F(0) by a central stalk formed by the gamma and epsilon chains, while a peripheral stalk is formed by the delta and b chains.

The protein localises to the cell inner membrane. Its function is as follows. F(1)F(0) ATP synthase produces ATP from ADP in the presence of a proton or sodium gradient. F-type ATPases consist of two structural domains, F(1) containing the extramembraneous catalytic core and F(0) containing the membrane proton channel, linked together by a central stalk and a peripheral stalk. During catalysis, ATP synthesis in the catalytic domain of F(1) is coupled via a rotary mechanism of the central stalk subunits to proton translocation. Component of the F(0) channel, it forms part of the peripheral stalk, linking F(1) to F(0). The chain is ATP synthase subunit b from Endomicrobium trichonymphae.